A 351-amino-acid polypeptide reads, in one-letter code: MFRAIPFTATVHPYAITAPRLVVKMSAIATKNTRVESLEVKPPAHPTYDLKEVMKLALSEDAGNLGDVTCKATIPLDMESDAHFLAKEDGIIAGIALAEMIFAEVDPSLKVEWYVNDGDKVHKGLKFGKVQGNAYNIVIAERVVLNFMQRMSGIATLTKEMADAAHPAYILETRKTAPGLRLVDKWAVLIGGGKNHRMGLFDMVMIKDNHISAAGGVGKALKSVDQYLEQNKLQIGVEVETRTIEEVREVLDYASQTKTSLTRIMLDNMVVPLSNGDIDVSMLKEAVELINGRFDTEASGNVTLETVHKIGQTGVTYISSGALTHSVKALDISLKIDTELALEVGRRTKRA.

Substrate-binding positions include Arg-142, 173–175 (TRK), Arg-197, Lys-207, Glu-240, Asp-267, 299–301 (SGN), and 320–322 (SGA).

The protein belongs to the NadC/ModD family. In terms of tissue distribution, expressed in roots and flowers.

The protein localises to the mitochondrion. It catalyses the reaction nicotinate beta-D-ribonucleotide + CO2 + diphosphate = quinolinate + 5-phospho-alpha-D-ribose 1-diphosphate + 2 H(+). The protein operates within alkaloid biosynthesis; nicotine biosynthesis. It functions in the pathway cofactor biosynthesis; NAD(+) biosynthesis; nicotinate D-ribonucleotide from quinolinate: step 1/1. Functionally, involved in the biosynthesis of pyridine alkaloid natural products, leading mainly to the production of anabasine, anatabine, nicotine and nornicotine, effective deterrents against herbivores with antiparasitic and pesticide properties (neurotoxins); nornicotine serves as the precursor in the synthesis of the carcinogen compound N'-nitrosonornicotine (NNN). Involved in the catabolism of quinolinic acid (QA). The chain is Quinolinate phosphoribosyltransferase [decarboxylating] 2b, mitochondrial from Nicotiana tabacum (Common tobacco).